Reading from the N-terminus, the 993-residue chain is Chromosome transmission fidelity protein 18 homolog (993 aa).

Positions 26–72 are disordered; the sequence is PDEFNAYDGPSTSKQAAEKQKENRAPVAALRDSTRLGNSTLGSPQLS. The span at 60-72 shows a compositional bias: polar residues; the sequence is RLGNSTLGSPQLS. 427–434 is a binding site for ATP; it reads GPPGLGKT. A disordered region spans residues 892–913; that stretch reads AAPKGGAPSAPAAKKKTSGAAA. Positions 894 to 913 are enriched in low complexity; the sequence is PKGGAPSAPAAKKKTSGAAA.

It belongs to the activator 1 small subunits family. CTF18 subfamily. In terms of assembly, component of the CTF18-RFC complex.

Its subcellular location is the nucleus. Chromosome cohesion factor involved in sister chromatid cohesion and fidelity of chromosome transmission. Component of one of the cell nuclear antigen loader complexes, CTF18-replication factor C (CTF18-RFC). The CTF18-RFC complex catalyzes the ATP-dependent loading of PCNA onto primed and gapped DNA and has weak ATPase activity. The CTF18-RFC complex catalyzes the ATP-dependent loading of PCNA onto primed and gapped DNA. This chain is Chromosome transmission fidelity protein 18 homolog, found in Drosophila melanogaster (Fruit fly).